The primary structure comprises 192 residues: ATP synthase protein MI25 (192 aa).

A helical transmembrane segment spans residues 29-49 (ILIYNEEMIVALCFIGFIIFS).

Belongs to the ATPase protein MI25 family. F-type ATPases have 2 components, CF(1) - the catalytic core - and CF(0) - the membrane proton channel. CF(1) has five subunits: alpha(3), beta(3), gamma(1), delta(1), epsilon(1). CF(0) has three main subunits: a, b and c.

Its subcellular location is the mitochondrion membrane. Functionally, this is one of the chains of the nonenzymatic component (CF(0) subunit) of the mitochondrial ATPase complex. This is ATP synthase protein MI25 (ATP4) from Arabidopsis thaliana (Mouse-ear cress).